Here is a 506-residue protein sequence, read N- to C-terminus: AMP phosphorylase (506 aa).

AMP is bound by residues Gly167, 193-198 (SRAITG), and Thr202. Catalysis depends on Asp255, which acts as the Proton donor. AMP-binding residues include Ser263 and Lys287.

This sequence belongs to the thymidine/pyrimidine-nucleoside phosphorylase family. Type 2 subfamily.

It catalyses the reaction AMP + phosphate = alpha-D-ribose 1,5-bisphosphate + adenine. The enzyme catalyses CMP + phosphate = cytosine + alpha-D-ribose 1,5-bisphosphate. It carries out the reaction UMP + phosphate = alpha-D-ribose 1,5-bisphosphate + uracil. Its function is as follows. Catalyzes the conversion of AMP and phosphate to adenine and ribose 1,5-bisphosphate (R15P). Exhibits phosphorylase activity toward CMP and UMP in addition to AMP. Functions in an archaeal AMP degradation pathway, together with R15P isomerase and RubisCO. The chain is AMP phosphorylase from Methanosarcina acetivorans (strain ATCC 35395 / DSM 2834 / JCM 12185 / C2A).